A 228-amino-acid polypeptide reads, in one-letter code: Trichome differentiation protein GL1 (228 aa).

HTH myb-type domains follow at residues 11-63 (NQEY…MNYL) and 64-118 (SPNV…SKKL). 2 DNA-binding regions (H-T-H motif) span residues 39-63 (WNRI…MNYL) and 91-114 (WSLI…NTHL).

Homodimer and heterodimer with MYB82. Interacts directly with GL3 and BHLH2. Part of a complex made of GL1, GL3 or BHLH2, and TTG1. Also interacts with BHLH2/EGL3/MYC146 and BHLH12/MYC1. Interacts with MYB82. Expressed in leaves, stems and flowers. Expressed in trichome cells and in leaf primordia.

The protein resides in the nucleus. Transcription activator, when associated with BHLH2/EGL3/MYC146 or BHLH12/MYC1. Involved in epidermal cell fate specification in leaves. Together with TTG1 and GL3, promotes trichome formation and endoreplication. Regulates the production of a signal that induces hair (trichome) precursor cells on leaf primordia to differentiate. Binds to the WER-binding sites (WBS) promoter regions and activates the transcription of target genes. This chain is Trichome differentiation protein GL1, found in Arabidopsis thaliana (Mouse-ear cress).